Consider the following 326-residue polypeptide: Vitamin B12 import system permease protein BtuC (326 aa).

The next 9 membrane-spanning stretches (helical) occupy residues 15–35 (WLLSLSLLVLLATLLSLCAGE), 61–81 (LAVLLVGAALALSGAVMQALF), 88–108 (PGLLGVSNGAGVGLIAAVLLG), 112–132 (LPGWALGLCAIAGALIITLIL), 146–166 (LLAGVALGIICSALMTWAIYF), 184–204 (GGVDWQQSWLMIALIPVLIWI), 240–260 (GWMVGVSVAMAGAIGFIGLVI), 274–294 (VLLPGCALAGAIALLLADVVA), and 302–322 (ELPIGVVTATLGAPVFIWLLL).

It belongs to the binding-protein-dependent transport system permease family. FecCD subfamily. As to quaternary structure, the complex is composed of two ATP-binding proteins (BtuD), two transmembrane proteins (BtuC) and a solute-binding protein (BtuF).

The protein resides in the cell inner membrane. Functionally, part of the ABC transporter complex BtuCDF involved in vitamin B12 import. Involved in the translocation of the substrate across the membrane. The protein is Vitamin B12 import system permease protein BtuC of Salmonella agona (strain SL483).